A 296-amino-acid polypeptide reads, in one-letter code: NADPH-dependent 1-acyldihydroxyacetone phosphate reductase (296 aa).

Position 9 (Ile9) interacts with NADP(+). The GXSXG motif lies at 11–15 (GCSEG). NADP(+) contacts are provided by Thr35, Arg41, Asp56, Asn84, Lys117, Tyr148, Lys152, Val181, and Thr183. Tyr148 functions as the Proton donor in the catalytic mechanism. The active-site Lowers pKa of active site Tyr is the Lys152.

This sequence belongs to the short-chain dehydrogenases/reductases (SDR) family.

Its subcellular location is the lipid droplet. The protein localises to the cytoplasm. It is found in the vacuole. It localises to the endoplasmic reticulum. The protein resides in the golgi apparatus. Its subcellular location is the mitochondrion outer membrane. The catalysed reaction is 1-hexadecanoyl-sn-glycero-3-phosphate + NADP(+) = 1-hexadecanoylglycerone 3-phosphate + NADPH + H(+). It catalyses the reaction a 1-acylglycerone 3-phosphate + NADPH + H(+) = a 1-acyl-sn-glycero-3-phosphate + NADP(+). The enzyme catalyses a triacylglycerol + H2O = a diacylglycerol + a fatty acid + H(+). In terms of biological role, can convert acyl and alkyl dihydroxyacetone-phosphate (DHAP) into glycerolipids and ether lipids, respectively. Required for the biosynthesis of phosphatidic acid via the DHAP pathway, where it reduces 1-acyl DHAP to lysophosphatidic acid (LPA). Also has triacylglycerol (TAG) lipase activity. Involved in the mobilization of the non-polar storage lipids triacylglycerols (TAGs) from lipid particles by hydrolysis of TAGs. Lipolysis of TAG by AYR1 is essential for starvation-induced autophagy. Forms an NADPH-regulated cation-selective channel in the mitochondrial outer membrane. In Schizosaccharomyces pombe (strain 972 / ATCC 24843) (Fission yeast), this protein is NADPH-dependent 1-acyldihydroxyacetone phosphate reductase (ayr1).